The primary structure comprises 274 residues: Formamidopyrimidine-DNA glycosylase (274 aa).

Pro-2 functions as the Schiff-base intermediate with DNA in the catalytic mechanism. Glu-3 (proton donor) is an active-site residue. Catalysis depends on Lys-58, which acts as the Proton donor; for beta-elimination activity. 2 residues coordinate DNA: His-92 and Arg-111. The segment at 239–273 adopts an FPG-type; degenerate zinc-finger fold; that stretch reads HVYGREGEPCERCGTIIEKIKVAQRGTHFCPLEQR. Arg-263 functions as the Proton donor; for delta-elimination activity in the catalytic mechanism.

It belongs to the FPG family. Monomer. The cofactor is Zn(2+).

The catalysed reaction is Hydrolysis of DNA containing ring-opened 7-methylguanine residues, releasing 2,6-diamino-4-hydroxy-5-(N-methyl)formamidopyrimidine.. The enzyme catalyses 2'-deoxyribonucleotide-(2'-deoxyribose 5'-phosphate)-2'-deoxyribonucleotide-DNA = a 3'-end 2'-deoxyribonucleotide-(2,3-dehydro-2,3-deoxyribose 5'-phosphate)-DNA + a 5'-end 5'-phospho-2'-deoxyribonucleoside-DNA + H(+). In terms of biological role, involved in base excision repair of DNA damaged by oxidation or by mutagenic agents. Acts as a DNA glycosylase that recognizes and removes damaged bases. Has a preference for oxidized purines, such as 7,8-dihydro-8-oxoguanine (8-oxoG). Has AP (apurinic/apyrimidinic) lyase activity and introduces nicks in the DNA strand. Cleaves the DNA backbone by beta-delta elimination to generate a single-strand break at the site of the removed base with both 3'- and 5'-phosphates. This Lactiplantibacillus plantarum (strain ATCC BAA-793 / NCIMB 8826 / WCFS1) (Lactobacillus plantarum) protein is Formamidopyrimidine-DNA glycosylase.